Reading from the N-terminus, the 98-residue chain is NADH-ubiquinone oxidoreductase chain 4L (98 aa).

3 helical membrane passes run Met-1–Met-21, Ser-29–Leu-49, and Ile-61–Val-81.

This sequence belongs to the complex I subunit 4L family. Core subunit of respiratory chain NADH dehydrogenase (Complex I) which is composed of 45 different subunits.

Its subcellular location is the mitochondrion inner membrane. The enzyme catalyses a ubiquinone + NADH + 5 H(+)(in) = a ubiquinol + NAD(+) + 4 H(+)(out). In terms of biological role, core subunit of the mitochondrial membrane respiratory chain NADH dehydrogenase (Complex I) which catalyzes electron transfer from NADH through the respiratory chain, using ubiquinone as an electron acceptor. Part of the enzyme membrane arm which is embedded in the lipid bilayer and involved in proton translocation. The sequence is that of NADH-ubiquinone oxidoreductase chain 4L (MT-ND4L) from Uroderma bilobatum (Tent-making bat).